A 269-amino-acid chain; its full sequence is 5'-nucleotidase SurE (269 aa).

The a divalent metal cation site is built by aspartate 11, aspartate 12, serine 43, and asparagine 101.

It belongs to the SurE nucleotidase family. A divalent metal cation serves as cofactor.

The protein resides in the cytoplasm. The catalysed reaction is a ribonucleoside 5'-phosphate + H2O = a ribonucleoside + phosphate. Functionally, nucleotidase that shows phosphatase activity on nucleoside 5'-monophosphates. In Synechococcus sp. (strain WH7803), this protein is 5'-nucleotidase SurE.